We begin with the raw amino-acid sequence, 355 residues long: Uroporphyrinogen decarboxylase (355 aa).

Substrate contacts are provided by residues 27–31 (RQAGR), D78, Y155, S210, and H328.

The protein belongs to the uroporphyrinogen decarboxylase family. In terms of assembly, homodimer.

It localises to the cytoplasm. It catalyses the reaction uroporphyrinogen III + 4 H(+) = coproporphyrinogen III + 4 CO2. It participates in porphyrin-containing compound metabolism; protoporphyrin-IX biosynthesis; coproporphyrinogen-III from 5-aminolevulinate: step 4/4. In terms of biological role, catalyzes the decarboxylation of four acetate groups of uroporphyrinogen-III to yield coproporphyrinogen-III. The chain is Uroporphyrinogen decarboxylase from Ectopseudomonas mendocina (strain ymp) (Pseudomonas mendocina).